A 158-amino-acid polypeptide reads, in one-letter code: Small ribosomal subunit protein uS15 (158 aa).

The segment covering 1-18 (MARMHARKRGKSGSKRPP) has biased composition (basic residues). Residues 1–21 (MARMHARKRGKSGSKRPPRTA) form a disordered region.

This sequence belongs to the universal ribosomal protein uS15 family. Part of the 30S ribosomal subunit.

The polypeptide is Small ribosomal subunit protein uS15 (Pyrococcus furiosus (strain ATCC 43587 / DSM 3638 / JCM 8422 / Vc1)).